A 189-amino-acid polypeptide reads, in one-letter code: UPF0312 protein VV2_0231 (189 aa).

Residues 1-22 form the signal peptide; that stretch reads MRKSVIATGLALMMAVPFAANA.

This sequence belongs to the UPF0312 family. Type 1 subfamily.

The protein localises to the periplasm. This Vibrio vulnificus (strain CMCP6) protein is UPF0312 protein VV2_0231.